A 283-amino-acid chain; its full sequence is Polyamine aminopropyltransferase (283 aa).

The 234-residue stretch at 3-236 (GIWFSELQTP…GLWAFSLGSK (234 aa)) folds into the PABS domain. An S-methyl-5'-thioadenosine-binding site is contributed by Gln-32. The spermidine site is built by His-63 and Asp-87. Residues Glu-107 and 138-139 (DG) contribute to the S-methyl-5'-thioadenosine site. Catalysis depends on Asp-156, which acts as the Proton acceptor. Position 156–159 (156–159 (DSTD)) interacts with spermidine. Residue Pro-163 participates in S-methyl-5'-thioadenosine binding.

This sequence belongs to the spermidine/spermine synthase family. Homodimer or homotetramer.

The protein resides in the cytoplasm. The catalysed reaction is S-adenosyl 3-(methylsulfanyl)propylamine + putrescine = S-methyl-5'-thioadenosine + spermidine + H(+). The protein operates within amine and polyamine biosynthesis; spermidine biosynthesis; spermidine from putrescine: step 1/1. Functionally, catalyzes the irreversible transfer of a propylamine group from the amino donor S-adenosylmethioninamine (decarboxy-AdoMet) to putrescine (1,4-diaminobutane) to yield spermidine. The protein is Polyamine aminopropyltransferase of Moorella thermoacetica (strain ATCC 39073 / JCM 9320).